Reading from the N-terminus, the 110-residue chain is Large ribosomal subunit protein P1 (110 aa).

A2 is subject to Blocked amino end (Ala). Low complexity predominate over residues 69–83 (AAPAAGGAAAATEAP). The interval 69–110 (AAPAAGGAAAATEAPAAKEEKKEEKKEESEEEDEDMGFGLFD) is disordered. Basic and acidic residues predominate over residues 84–96 (AAKEEKKEEKKEE). The residue at position 97 (S97) is a Phosphoserine; in form eL12'-P.

Part of the ribosomal stalk of the large ribosomal subunit; P1 and P2 exist as dimers which assemble on the P0 scaffold. Post-translationally, phosphorylation of Ser-97 converts eL12' to eL12'-P.

Plays an important role in the elongation step of protein synthesis. The protein is Large ribosomal subunit protein P1 of Artemia salina (Brine shrimp).